We begin with the raw amino-acid sequence, 91 residues long: Small ribosomal subunit protein uS19 (91 aa).

It belongs to the universal ribosomal protein uS19 family.

In terms of biological role, protein S19 forms a complex with S13 that binds strongly to the 16S ribosomal RNA. This Lactiplantibacillus plantarum (strain ATCC BAA-793 / NCIMB 8826 / WCFS1) (Lactobacillus plantarum) protein is Small ribosomal subunit protein uS19.